Consider the following 551-residue polypeptide: MLDKSVLYNVSEKPGVYIFKNGSEYIYIGKAKNLKRRLNSHFSLKEEKSRLIVEESNSLEVIIVKNEKEALLLEATLIFKHKPKYNIMLKEGERYPYIRISDDEYPYVEVTRSRKSSGIFFGPFTNITFTRLLLEILQKIFGVRTCKKDLSKIKKPCIEYHLKTCLAPCKFENKNIYMSAINNLKKVLSGDFEFVKDYIEQKMNYHSKMLDFENAAKYRDLLLSFEKLLNTQGVILNDKRCVDYIAYSKKVFLVLKVRGGVLLSKLFYEANLSFEEFLYQFYYGMKSDLPTKIVTFESSNLNKIEFDIPINVSLDDSDRYLLEIAYENLKEHFKAKRLRRDTLKKIKEILGLKKIPYRIEGTDISHRNGKFTVASLVVFENGVPKPEEYRRYKLGDILDDFESIRMFIRKRYTKHEAPDLIFVDGGRGQVNAAIEAFNELGLDVDVVGIAKKEEIIVTKNKEFKLKENDEVLRTLISIRDETHRVANSFSGSLKLKNYTLSKLDDIPGIGPKRKKILLKKYKSIENIKNAPLEELSKIVGNKIALRLKEYL.

In terms of domain architecture, GIY-YIG spans glutamate 12–isoleucine 87. Positions glutamate 193–leucine 228 constitute a UVR domain.

Belongs to the UvrC family. Interacts with UvrB in an incision complex.

It localises to the cytoplasm. In terms of biological role, the UvrABC repair system catalyzes the recognition and processing of DNA lesions. UvrC both incises the 5' and 3' sides of the lesion. The N-terminal half is responsible for the 3' incision and the C-terminal half is responsible for the 5' incision. This chain is UvrABC system protein C, found in Thermosipho africanus (strain TCF52B).